Reading from the N-terminus, the 405-residue chain is CMP-sialic acid transporter 3 (405 aa).

Over 1-39 (MKNGIAECPACHSKLVSPGSKTISRAYDDHKIRVSSKQR) the chain is Cytoplasmic. A helical membrane pass occupies residues 40–60 (VLNVLLVVGDCMLVGLQPVLV). At 61 to 73 (YMSKVDGKFNFSP) the chain is on the lumenal side. A helical membrane pass occupies residues 74-94 (ISVNFLTEIAKVIFAIVMLLI). At 95–142 (QARHQKVGEKPLLSVSTFVQAARNNVLLAVPALLYAINNYLKFTMQLY) the chain is on the cytoplasmic side. A helical transmembrane segment spans residues 143 to 163 (FNPATVKMLSNLKVLVIAVLL). The Lumenal segment spans residues 164–170 (KMVMKRR). A helical membrane pass occupies residues 171-191 (FSIIQWEALALLLIGISVNQL). Topologically, residues 192 to 199 (RSLPEGAT) are cytoplasmic. A helical membrane pass occupies residues 200–220 (AIGIPLATGAYVCTVIFVTVP). At 221 to 243 (SMASVFNEYALKSQYDTSIYLQN) the chain is on the lumenal side. Residues 244 to 264 (LFLYGYGAIFNFLGILGTVIY) form a helical membrane-spanning segment. Over 265–280 (KGPGSFDILQGHSRAT) the chain is Cytoplasmic. The helical transmembrane segment at 281-301 (MFLILNNAAQGILSSFFFKYA) threads the bilayer. At 302–321 (DTILKKYSSTVATIFTGIAS) the chain is on the lumenal side. The chain crosses the membrane as a helical span at residues 322 to 342 (AALFGHVITMNFLLGISIVFI). Residues 343–405 (SMHQFFSPLA…SDDRTPLLPR (63 aa)) are Cytoplasmic-facing. Residues 385–405 (GANEEASHRGESDDRTPLLPR) are disordered. Over residues 389 to 405 (EASHRGESDDRTPLLPR) the composition is skewed to basic and acidic residues.

This sequence belongs to the nucleotide-sugar transporter family. CMP-Sialate:CMP antiporter (TC 2.A.7.12) subfamily.

The protein localises to the golgi apparatus membrane. Functionally, sugar transporter involved in the transport of CMP-sialic acid from the cytoplasm into the Golgi. In Arabidopsis thaliana (Mouse-ear cress), this protein is CMP-sialic acid transporter 3 (UTR6).